We begin with the raw amino-acid sequence, 119 residues long: V-type proton ATPase subunit F (119 aa).

The protein belongs to the V-ATPase F subunit family. V-ATPase is a heteromultimeric enzyme composed of a peripheral catalytic V1 complex (components A to H) attached to an integral membrane V0 proton pore complex (components: a, c, c', c'', d, e, f and VOA1).

It is found in the vacuole membrane. In terms of biological role, subunit of the V1 complex of vacuolar(H+)-ATPase (V-ATPase), a multisubunit enzyme composed of a peripheral complex (V1) that hydrolyzes ATP and a membrane integral complex (V0) that translocates protons. V-ATPase is responsible for acidifying and maintaining the pH of intracellular compartments. The polypeptide is V-type proton ATPase subunit F (VMA7) (Vanderwaltozyma polyspora (strain ATCC 22028 / DSM 70294 / BCRC 21397 / CBS 2163 / NBRC 10782 / NRRL Y-8283 / UCD 57-17) (Kluyveromyces polysporus)).